The following is an 88-amino-acid chain: MFGQRQSLIVYLHSLKHAKILRKYGNIHYISKRLKYAVVYCDMDQLEHMMHKLNKLPFVKRIEQSYRPFLKTEFENSRPDRAKEYDYS.

It belongs to the UPF0298 family.

It is found in the cytoplasm. In Bacillus cytotoxicus (strain DSM 22905 / CIP 110041 / 391-98 / NVH 391-98), this protein is UPF0298 protein Bcer98_2635.